The following is a 252-amino-acid chain: NAD-dependent protein deacetylase (252 aa).

The region spanning 1 to 248 (MYLVEEAKKV…PEVISHIQSL (248 aa)) is the Deacetylase sirtuin-type domain. Ala-26, Thr-30, Phe-37, Arg-38, Gln-102, Val-104, Asp-105, and His-120 together coordinate NAD(+). Phe-37 lines the nicotinamide pocket. 2 residues coordinate nicotinamide: Val-104 and Asp-105. The active-site Proton acceptor is His-120. Residues Cys-128, Cys-131, Cys-153, and Cys-155 each coordinate Zn(2+). The NAD(+) site is built by Ser-191, Ser-192, Asn-216, and Ile-234.

This sequence belongs to the sirtuin family. Class U subfamily. Requires Zn(2+) as cofactor.

It localises to the cytoplasm. The enzyme catalyses N(6)-acetyl-L-lysyl-[protein] + NAD(+) + H2O = 2''-O-acetyl-ADP-D-ribose + nicotinamide + L-lysyl-[protein]. Its function is as follows. NAD-dependent protein deacetylase which modulates the activities of several enzymes which are inactive in their acetylated form. Deacetylates the N-terminal lysine residue of Alba, the major archaeal chromatin protein and that, in turn, increases Alba's DNA binding affinity, thereby repressing transcription. This Sulfolobus acidocaldarius (strain ATCC 33909 / DSM 639 / JCM 8929 / NBRC 15157 / NCIMB 11770) protein is NAD-dependent protein deacetylase.